Here is a 148-residue protein sequence, read N- to C-terminus: uncharacterized protein (148 aa).

It to A.tumefaciens Atu0565/AGR_C_992.

This is an uncharacterized protein from Rhizobium meliloti (strain 1021) (Ensifer meliloti).